A 1354-amino-acid chain; its full sequence is MSLTSRYTHFVPDSTITEILNDSNTPQILLHYANIVNGSTPVHFTSHHDNQVNWTVATLTRMSQYMIPDFMKLFPPLEPTLSLQPDCHCSFINLPRPEIKIPIEILSPPKPNYAKYHYDATTSRVFVNSKHEMYMDNFDVSQLIRDVAAIKTDSPSGNITKGLLKTFHDSIKLRALSPIMSMFHSLLSYRCPCCTSLNGMKKLNHLCFQYSSIYAFLCDMVRPYMCVPFFVDRLGVQILPGFKVSSQYPLLFFEAIELMHTVGLGNLSDSLSGWCFYTWLDRARIGVFREMFNRRGSITMLKSRVVSTGTIFRFSQREFVIESITEQRSTDISPTFEECSFSDSQYIQDNCYKPIYDITTTLDDVKCRWLDVALNYFYGAVLYVTGPVSLALEQSGMGRPGSLNLQFGGTTDVYVEGRWITIDVEPVSPFVSRIKQLADRELAKTKVNGDSLEHGFFEAQTTNSAGNTKETLAGLRSEIIEQHDSPQEGRLLASMAGIRVIDAMRRFNTTFRDHTEFLNEVRRPTKAGMRYQQQRRPRVIQMTGTEAQLGGWLLLNVYEPTYKRLGYTSSGKNIGDIRDMQAVLEASGQNGINSSVDIIGMDASTQNTHVTLLGSAAIKAYNPERIGFPKMFFQSTHNGGDANSRVLPTRVTRDGQTIPKDDDVKYNLPQLAIIYSLHGMHGPTILYDGYFAPAVLTSQTVFRSGWYNTSSQHTMLGSLVLLSLEEDIRNGYKNPYDGAPERSLIAKHWHSIRIIGRVLGDDILLKAFGPPTLTPDELREVTAEVCAEFEHRMELLGFLCERAFSDVMCEFLKQKGFGGAPHMFPDRLVLYTSERGNQAMTNPTTMYRVCDALIIEFNSRSRNIFNTCVSRRVLQTVCSTFALRMTSSGHLVRRSYASRKPYSRVAKVSDGILSELHNHKTVFRIIDYNVLGDHIAMIFLPMLWATNHILGCPPPAIVSISGANIPAASPLTYPSAAITTFWLTATSRRKIDFDSSATAYKKSMSDISNLTAVPLDIIFSFSNAMELSPLSINLDKDYDIDTLRTFGFIVGIMSDSLFPTPSATRAKIKSPVVDDWSRYADSLLNPTRVRSSHHGSEILAESNVVVPYELRYAHRGTAKVRQSMYELPVTDLEYGENTMTTLTQLSESLKVKPGTSKLLRDAMLAGEVFVIPTTHPVTLPCPSFDAHGYGHIIPPNSLQSLLLTHLGLPVSSASYTSSFAKTILSDGKLPGSAEAYLSLYQETYKKGPSAVAYLKDAIGFSDSSMSALERLASNGLYGISGASFAYNPRGGFFFRFDQDNADRFGTSLSPSPTIRRLDIVHMMFTMLMYPTTMVSQNQWMMVRFGRSFSRLARR.

It carries out the reaction RNA(n) + a ribonucleoside 5'-triphosphate = RNA(n+1) + diphosphate. Functionally, RNA-directed RNA polymerase that is involved in transcription and genome replication. Following infection, it catalyzes the synthesis of fully conservative plus strands. After core assembly, which consists in recruitment of one capped plus-strand for each genomic segments and polymerase complexes, the polymerase switches mode and catalyzes the synthesis of complementary minus-strands. The protein is RNA-directed RNA polymerase VP1 of Cryphonectria parasitica mycoreovirus 1 (strain 9B21) (CpMYRV-1).